Here is an 817-residue protein sequence, read N- to C-terminus: DNA mismatch repair protein MutS (817 aa).

An ATP-binding site is contributed by 604–611 (GPNMSGKS).

This sequence belongs to the DNA mismatch repair MutS family.

Its function is as follows. This protein is involved in the repair of mismatches in DNA. It is possible that it carries out the mismatch recognition step. This protein has a weak ATPase activity. This is DNA mismatch repair protein MutS from Petrotoga mobilis (strain DSM 10674 / SJ95).